Consider the following 296-residue polypeptide: 2-methylisocitrate lyase (296 aa).

Substrate is bound at residue 45-47 (SGG). Residues D85 and D87 each contribute to the Mg(2+) site. Substrate contacts are provided by residues 123 to 124 (CG), R158, E188, 210 to 212 (NIT), R241, and R270.

The protein belongs to the isocitrate lyase/PEP mutase superfamily. Methylisocitrate lyase family. As to quaternary structure, homotetramer; dimer of dimers. Mg(2+) is required as a cofactor.

The enzyme catalyses (2S,3R)-3-hydroxybutane-1,2,3-tricarboxylate = pyruvate + succinate. It participates in organic acid metabolism; propanoate degradation. Involved in the catabolism of short chain fatty acids (SCFA) via the 2-methylcitrate cycle I (propionate degradation route). Catalyzes the thermodynamically favored C-C bond cleavage of (2R,3S)-2-methylisocitrate to yield pyruvate and succinate via an alpha-carboxy-carbanion intermediate. The polypeptide is 2-methylisocitrate lyase (Escherichia coli (strain K12)).